We begin with the raw amino-acid sequence, 261 residues long: ATP synthase subunit a (261 aa).

Transmembrane regions (helical) follow at residues 31–51 (IAFTNSAMWMVVTLAALLIFM), 64–84 (WQAAVESFTGFVAGMMATNIG), 97–117 (LFMFILIANIMGMMPTGVVGV), 126–146 (LTVTGVLAVISFSIVLVVGFW), 166–188 (IPMIFVIELFSFLIRPFSLGLRL), 201–223 (VLAGFVINGINAGALTVAIVSIP), and 235–255 (ELLVCAIQAYVFALLTSLYLN).

The protein belongs to the ATPase A chain family. As to quaternary structure, F-type ATPases have 2 components, CF(1) - the catalytic core - and CF(0) - the membrane proton channel. CF(1) has five subunits: alpha(3), beta(3), gamma(1), delta(1), epsilon(1). CF(0) has three main subunits: a(1), b(2) and c(9-12). The alpha and beta chains form an alternating ring which encloses part of the gamma chain. CF(1) is attached to CF(0) by a central stalk formed by the gamma and epsilon chains, while a peripheral stalk is formed by the delta and b chains.

The protein resides in the cell inner membrane. Its function is as follows. Key component of the proton channel; it plays a direct role in the translocation of protons across the membrane. This Rhizorhabdus wittichii (strain DSM 6014 / CCUG 31198 / JCM 15750 / NBRC 105917 / EY 4224 / RW1) (Sphingomonas wittichii) protein is ATP synthase subunit a.